The following is a 166-amino-acid chain: Endoribonuclease YbeY (166 aa).

Positions 132, 136, and 142 each coordinate Zn(2+).

The protein belongs to the endoribonuclease YbeY family. Zn(2+) serves as cofactor.

It localises to the cytoplasm. Its function is as follows. Single strand-specific metallo-endoribonuclease involved in late-stage 70S ribosome quality control and in maturation of the 3' terminus of the 16S rRNA. This chain is Endoribonuclease YbeY, found in Clostridium botulinum (strain 657 / Type Ba4).